The following is a 472-amino-acid chain: P2X purinoceptor 2 (472 aa).

Over Met-1–Arg-34 the chain is Cytoplasmic. Intrachain disulfides connect Cys-9–Cys-430, Cys-113–Cys-164, Cys-124–Cys-147, Cys-130–Cys-158, Cys-214–Cys-224, and Cys-258–Cys-267. Residues Met-35–Gln-52 form a helical membrane-spanning segment. The Extracellular portion of the chain corresponds to Lys-53–Ser-326. Lys-69 and Lys-71 together coordinate ATP. An N-linked (GlcNAc...) asparagine glycan is attached at Asn-182. Thr-184 provides a ligand contact to ATP. The N-linked (GlcNAc...) asparagine glycan is linked to Asn-239. Positions 284, 288, and 290 each coordinate ATP. The N-linked (GlcNAc...) asparagine glycan is linked to Asn-298. Lys-308 is a binding site for ATP. A pore-forming motif region spans residues Ala-309–Ala-322. Residues Leu-327 to Leu-347 form a helical membrane-spanning segment. The Cytoplasmic portion of the chain corresponds to Cys-348–Leu-472. Positions Pro-393–Leu-472 are disordered. A compositionally biased stretch (polar residues) spans Pro-456–Asp-465.

This sequence belongs to the P2X receptor family. As to quaternary structure, homotrimer and heterotrimer; functional P2XRs are organized as homomeric and heteromeric trimers. Homotrimer. Forms heterotrimer with P2RX1. Forms heterotrimer with P2RX6. Forms heterotrimer with P2RX3. High levels in pituitary and vas deferens. Lower extent in spinal cord, bladder, brain, adrenal, testis, sensory epithelia from the inner ear.

The protein resides in the cell membrane. It catalyses the reaction Ca(2+)(in) = Ca(2+)(out). The enzyme catalyses K(+)(in) = K(+)(out). It carries out the reaction Na(+)(in) = Na(+)(out). Fast activation by external ATP. Exhibits slow desensitization during prolonged ATP activation. Not sensitive to the ATP agonist:alpha/beta-methylene-ATP. In terms of biological role, ATP-gated nonselective transmembrane cation channel permeable to potassium, sodium and calcium. Activation by extracellular ATP induces a variety of cellular responses, such as excitatory postsynaptic responses in sensory neurons, neuromuscular junctions (NMJ) formation, hearing, perception of taste and peristalsis. In the inner ear, regulates sound transduction and auditory neurotransmission, outer hair cell electromotility, inner ear gap junctions, and K(+) recycling. Mediates synaptic transmission between neurons and from neurons to smooth muscle. The protein is P2X purinoceptor 2 (P2rx2) of Rattus norvegicus (Rat).